Here is a 175-residue protein sequence, read N- to C-terminus: Peptide deformylase (175 aa).

Fe cation-binding residues include Cys98 and His140. Glu141 is an active-site residue. Residue His144 coordinates Fe cation.

It belongs to the polypeptide deformylase family. The cofactor is Fe(2+).

It catalyses the reaction N-terminal N-formyl-L-methionyl-[peptide] + H2O = N-terminal L-methionyl-[peptide] + formate. Functionally, removes the formyl group from the N-terminal Met of newly synthesized proteins. Requires at least a dipeptide for an efficient rate of reaction. N-terminal L-methionine is a prerequisite for activity but the enzyme has broad specificity at other positions. This is Peptide deformylase from Bradyrhizobium sp. (strain BTAi1 / ATCC BAA-1182).